A 471-amino-acid polypeptide reads, in one-letter code: Ubiquitin carboxyl-terminal hydrolase calypso (471 aa).

In terms of domain architecture, UCH catalytic spans 45–276 (GWLELESDPG…IRFNLMAVVP (232 aa)). The active-site Nucleophile is Cys131. The Proton donor role is filled by His213. Coiled coils occupy residues 240–256 (WEDS…VMAE) and 298–324 (GTLQ…DTPT). A disordered region spans residues 307-326 (DEQGESGNGDSQRPDTPTTL). The segment covering 314–326 (NGDSQRPDTPTTL) has biased composition (polar residues). The ULD domain maps to 375–403 (NYDKFICTFLSMLAHQGVLGELVSQHLLP). The tract at residues 405–471 (KKVSGQGAAN…KGRNKCRKRK (67 aa)) is positively charged C-terminal tail required for binding nucleosomes. Residues 412–471 (AANRISKQSTTASAGGSTAAGTASTPKTQQQQAAAAKNGKSPSKTPGRRRKGRNKCRKRK) are disordered. Residues 420–447 (STTASAGGSTAAGTASTPKTQQQQAAAA) show a composition bias toward low complexity. The span at 457-471 (PGRRRKGRNKCRKRK) shows a compositional bias: basic residues.

This sequence belongs to the peptidase C12 family. BAP1 subfamily. As to quaternary structure, catalytic component of the polycomb repressive deubiquitinase (PR-DUB) complex, at least composed of caly/calypso, Asx and sba (MBD5/6 homolog). The PR-DUB complex associates with nucleosomes to mediate deubiquitination of histone H2AK118ub1 substrates; the association requires the positively charged C-terminal tail of caly, probably due to direct binding of DNA. Interacts (via ULD domain) with Asx (via DEUBAD domain); the interaction produces a stable heterodimer with a composite binding site for ubiquitin. Homodimerizes (via coiled-coil hinge-region between the UCH and ULD domains) to mediate assembly of 2 copies of the caly-Asx heterodimer into a bisymmetric tetramer; dimerization enhances PR-DUB association with nucleosomes.

It localises to the nucleus. It catalyses the reaction Thiol-dependent hydrolysis of ester, thioester, amide, peptide and isopeptide bonds formed by the C-terminal Gly of ubiquitin (a 76-residue protein attached to proteins as an intracellular targeting signal).. Functionally, catalytic component of the polycomb repressive deubiquitinase (PR-DUB) complex, a complex that specifically mediates deubiquitination of histone H2A monoubiquitinated at 'Lys-119' (H2AK118ub1). Mediates bisymmetric organization of the PR-DUB complex and is involved in association with nucleosomes to mediate deubiquitination. Does not deubiquitinate monoubiquitinated histone H2B. Required to maintain the transcriptionally repressive state of homeotic genes throughout development. The PR-DUB complex has weak or no activity toward 'Lys-48'- and 'Lys-63'-linked polyubiquitin chains. Polycomb group (PcG) protein. In Drosophila melanogaster (Fruit fly), this protein is Ubiquitin carboxyl-terminal hydrolase calypso.